Here is a 106-residue protein sequence, read N- to C-terminus: Small ribosomal subunit protein bS18 (106 aa).

The disordered stretch occupies residues 1–32 (MRWMKIMSEDMKQEQSGEGRGGRGGPARPLAS). The segment covering 7 to 21 (MSEDMKQEQSGEGRG) has biased composition (basic and acidic residues).

The protein belongs to the bacterial ribosomal protein bS18 family. As to quaternary structure, part of the 30S ribosomal subunit. Forms a tight heterodimer with protein bS6.

Its function is as follows. Binds as a heterodimer with protein bS6 to the central domain of the 16S rRNA, where it helps stabilize the platform of the 30S subunit. The chain is Small ribosomal subunit protein bS18 from Magnetococcus marinus (strain ATCC BAA-1437 / JCM 17883 / MC-1).